We begin with the raw amino-acid sequence, 200 residues long: Recombination protein RecR (200 aa).

The C4-type zinc finger occupies 58-75 (CSNCFCLKISQTSPCNFC). The 96-residue stretch at 82–177 (SSLCIVATPK…KISRLALGMP (96 aa)) folds into the Toprim domain.

Belongs to the RecR family.

In terms of biological role, may play a role in DNA repair. It seems to be involved in an RecBC-independent recombinational process of DNA repair. It may act with RecF and RecO. This Chlamydia trachomatis serovar L2 (strain ATCC VR-902B / DSM 19102 / 434/Bu) protein is Recombination protein RecR.